The sequence spans 122 residues: Large ribosomal subunit protein uL14 (122 aa).

Belongs to the universal ribosomal protein uL14 family. As to quaternary structure, part of the 50S ribosomal subunit. Forms a cluster with proteins L3 and L19. In the 70S ribosome, L14 and L19 interact and together make contacts with the 16S rRNA in bridges B5 and B8.

Functionally, binds to 23S rRNA. Forms part of two intersubunit bridges in the 70S ribosome. The chain is Large ribosomal subunit protein uL14 from Anaeromyxobacter dehalogenans (strain 2CP-1 / ATCC BAA-258).